A 607-amino-acid polypeptide reads, in one-letter code: Heterocyst differentiation ATP-binding protein HepA (607 aa).

Positions 32–330 (AILAVIFSFL…INGTVAFLST (299 aa)) constitute an ABC transmembrane type-1 domain. 5 consecutive transmembrane segments (helical) span residues 33–53 (ILAVIFSFLAASFEGVSIGFL), 77–97 (ILAADAWPIPPIYRISLLILL), 163–182 (FSGLAFVLTRIMTVCVYFVV), 186–208 (ISWQLSIISVLIFLLLAVGLSTL), and 290–310 (IVISFATFTLPVASLLTFFFV). Positions 364–598 (IDLVSVDFGY…RGKLWKYHQM (235 aa)) constitute an ABC transporter domain. An ATP-binding site is contributed by 397–404 (GASGAGKT).

The protein belongs to the ABC transporter superfamily.

The protein resides in the cell inner membrane. Functionally, acts early in the process of morphological differentiation of heterocysts. The sequence is that of Heterocyst differentiation ATP-binding protein HepA (hepA) from Nostoc sp. (strain PCC 7120 / SAG 25.82 / UTEX 2576).